Consider the following 118-residue polypeptide: Basic phospholipase A2 acanthin-2 (118 aa).

Cystine bridges form between Cys-11/Cys-71, Cys-27/Cys-117, Cys-29/Cys-45, Cys-44/Cys-98, Cys-51/Cys-91, Cys-60/Cys-84, and Cys-78/Cys-89. Tyr-28, Gly-30, and Gly-32 together coordinate Ca(2+). His-48 is a catalytic residue. Asp-49 is a binding site for Ca(2+). Asp-92 is an active-site residue.

It depends on Ca(2+) as a cofactor. Expressed by the venom gland.

The protein resides in the secreted. The catalysed reaction is a 1,2-diacyl-sn-glycero-3-phosphocholine + H2O = a 1-acyl-sn-glycero-3-phosphocholine + a fatty acid + H(+). Snake venom phospholipase A2 (PLA2) that potently inhibits ADP-(IC(50)=12 nM) and collagen-induced (IC(50)=4 nM) platelet aggregation when tested on human whole blood. PLA2 catalyzes the calcium-dependent hydrolysis of the 2-acyl groups in 3-sn-phosphoglycerides. The polypeptide is Basic phospholipase A2 acanthin-2 (Acanthophis antarcticus (Common death adder)).